The primary structure comprises 246 residues: tRNA pseudouridine synthase A (246 aa).

The active-site Nucleophile is Asp-54. Tyr-112 contacts substrate.

The protein belongs to the tRNA pseudouridine synthase TruA family. In terms of assembly, homodimer.

The catalysed reaction is uridine(38/39/40) in tRNA = pseudouridine(38/39/40) in tRNA. Formation of pseudouridine at positions 38, 39 and 40 in the anticodon stem and loop of transfer RNAs. In Moorella thermoacetica (strain ATCC 39073 / JCM 9320), this protein is tRNA pseudouridine synthase A.